Here is a 583-residue protein sequence, read N- to C-terminus: Leucine-rich repeat-containing protein 47 (583 aa).

A2 bears the N-acetylalanine mark. LRR repeat units follow at residues 76-95 (QLHSLVLRRNALGPGLSPEL), 100-121 (ALRVLDLSGNALEALPPGQGLG), 130-152 (QLQSLNLSGNRLRELPADLARCA), 154-175 (RLQSLNLTGNCLDSFPAELFRP), 180-202 (LLSELAAADNCLRELSPDIAHLA), 203-225 (SLKTLDLSNNQLSEIPAELADCP), and 226-246 (KLKEINFRGNKLRDKRLEKMV). The tract at residues 260-300 (VGGRGGGKGKGRAEGSEKEESRRKRRERKQRREGGDGEEQD) is disordered. A compositionally biased stretch (basic and acidic residues) spans 270–281 (GRAEGSEKEESR). S315 and S431 each carry phosphoserine. Residues 402–437 (LGRKEAKAKELVRQLQLEAEEQRKQKKRQSVSGLHR) adopt a coiled-coil conformation. At Y509 the chain carries Phosphotyrosine. Positions 513–544 (NKEEGSLSDTEADAVSGQLPDPTTNPSAGKDG) are disordered. Phosphoserine occurs at positions 518 and 520.

In Homo sapiens (Human), this protein is Leucine-rich repeat-containing protein 47 (LRRC47).